The following is a 308-amino-acid chain: Porphobilinogen deaminase (308 aa).

Cys243 carries the S-(dipyrrolylmethanemethyl)cysteine modification.

The protein belongs to the HMBS family. In terms of assembly, monomer. The cofactor is dipyrromethane.

The enzyme catalyses 4 porphobilinogen + H2O = hydroxymethylbilane + 4 NH4(+). The protein operates within porphyrin-containing compound metabolism; protoporphyrin-IX biosynthesis; coproporphyrinogen-III from 5-aminolevulinate: step 2/4. In terms of biological role, tetrapolymerization of the monopyrrole PBG into the hydroxymethylbilane pre-uroporphyrinogen in several discrete steps. The sequence is that of Porphobilinogen deaminase from Nitrosomonas europaea (strain ATCC 19718 / CIP 103999 / KCTC 2705 / NBRC 14298).